A 175-amino-acid chain; its full sequence is Beta-carotene hydroxylase (175 aa).

Positions 11 to 136 constitute a Fatty acid hydroxylase domain; that stretch reads FVTVIGMEVI…RGKEGCVSFG (126 aa).

Belongs to the sterol desaturase family.

The enzyme catalyses all-trans-beta-carotene + 4 reduced [2Fe-2S]-[ferredoxin] + 2 O2 + 4 H(+) = all-trans-zeaxanthin + 4 oxidized [2Fe-2S]-[ferredoxin] + 2 H2O. It participates in carotenoid biosynthesis; zeaxanthin biosynthesis. Its function is as follows. Catalyzes the hydroxylation reaction from beta-carotene to zeaxanthin. This chain is Beta-carotene hydroxylase (crtZ), found in Pantoea ananas (Erwinia uredovora).